Here is a 964-residue protein sequence, read N- to C-terminus: Translation initiation factor IF-2 (964 aa).

Positions 105–119 (AALAESEASEAAPVV) are enriched in low complexity. Disordered regions lie at residues 105 to 133 (AALA…EHRR) and 146 to 378 (KARQ…PTEP). Composition is skewed to basic and acidic residues over residues 123-133 (EVARREEEHRR), 146-183 (KARQ…KAEE), 197-253 (EAPR…RAIR), and 266-278 (PAER…KKAE). The span at 288 to 302 (KPAGEARPAAAKKPA) shows a compositional bias: low complexity. Positions 303-313 (APAPAAAPAPG) are enriched in pro residues. Residues 464–633 (TRPPVVTVMG…LLQAEVLELK (170 aa)) enclose the tr-type G domain. A G1 region spans residues 473–480 (GHVDHGKT). 473 to 480 (GHVDHGKT) contacts GTP. The tract at residues 498 to 502 (GITQH) is G2. The segment at 519–522 (DTPG) is G3. GTP contacts are provided by residues 519 to 523 (DTPGH) and 573 to 576 (TKVD). Residues 573–576 (TKVD) are G4. The tract at residues 609 to 611 (SAK) is G5.

The protein belongs to the TRAFAC class translation factor GTPase superfamily. Classic translation factor GTPase family. IF-2 subfamily.

The protein localises to the cytoplasm. Its function is as follows. One of the essential components for the initiation of protein synthesis. Protects formylmethionyl-tRNA from spontaneous hydrolysis and promotes its binding to the 30S ribosomal subunits. Also involved in the hydrolysis of GTP during the formation of the 70S ribosomal complex. This is Translation initiation factor IF-2 from Ralstonia pickettii (strain 12J).